Here is a 508-residue protein sequence, read N- to C-terminus: MGTRGLALALLAAVLLLQTVLPAASEAEGLVRIALKKRPIDRNSRVATGLSGGEEQPLLSGANPLRSEEEGDIVALKNYMNAQYFGEIGVGTPPQKFTVIFDTGSSNLWVPSAKCYFSIACYLHSRYKAGASSTYKKNGKPAAIQYGTGSIAGYFSEDSVTVGDLVVKDQEFIEATKEPGITFLVAKFDGILGLGFKEISVGKAVPVWYKMIEQGLVSDPVFSFWLNRHVDEGEGGEIIFGGMDPKHYVGEHTYVPVTQKGYWQFDMGDVLVGGKSTGFCAGGCAAIADSGTSLLAGPTAIITEINEKIGAAGVVSQECKTIVSQYGQQILDLLLAETQPKKICSQVGLCTFDGTRGVSAGIRSVVDDEPVKSNGLRADPMCSACEMAVVWMQNQLAQNKTQDLILDYVNQLCNRLPSPMGESAVDCGSLGSMPDIEFTIGGKKFALKPEEYILKVGEGAAAQCISGFTAMDIPPPRGPLWILGDVFMGPYHTVFDYGKLRIGFAKAA.

The N-terminal stretch at 1 to 27 (MGTRGLALALLAAVLLLQTVLPAASEA) is a signal peptide. The propeptide at 28–66 (EGLVRIALKKRPIDRNSRVATGLSGGEEQPLLSGANPLR) is activation peptide. Positions 84-505 (YFGEIGVGTP…DYGKLRIGFA (422 aa)) constitute a Peptidase A1 domain. Residue Asp-102 is part of the active site. 2 disulfides stabilise this stretch: Cys-115-Cys-121 and Cys-280-Cys-284. The active site involves Asp-289. The Saposin B-type domain maps to 314–419 (VVSQECKTIV…NQLCNRLPSP (106 aa)). Disulfide bonds link Cys-319/Cys-413, Cys-344/Cys-385, Cys-350/Cys-382, and Cys-427/Cys-464. Asn-399 carries N-linked (GlcNAc...) asparagine glycosylation.

The protein belongs to the peptidase A1 family. Heterodimer of two subunits (29 kDa and 11 kDa) processed from the precursor molecule. A large enzyme (32 kDa and 16 kDa) is an intermediate precursor form. As to expression, embryo and leaf.

The protein resides in the vacuole. It catalyses the reaction Prefers hydrophobic residues Phe, Val, Ile, Leu, and Ala at P1 and P1', but also cleaves -Phe-|-Asp- and -Asp-|-Asp- bonds in 2S albumin from plant seeds.. Involved in the breakdown of propeptides of storage proteins in protein-storage vacuoles. The protein is Phytepsin of Hordeum vulgare (Barley).